A 151-amino-acid chain; its full sequence is Large ribosomal subunit protein uL13 (151 aa).

The protein belongs to the universal ribosomal protein uL13 family. In terms of assembly, part of the 50S ribosomal subunit.

This protein is one of the early assembly proteins of the 50S ribosomal subunit, although it is not seen to bind rRNA by itself. It is important during the early stages of 50S assembly. This is Large ribosomal subunit protein uL13 from Acaryochloris marina (strain MBIC 11017).